Reading from the N-terminus, the 380-residue chain is NADPH oxidoreductase (380 aa).

The 107-residue stretch at 58 to 164 (ARELRGRILG…AAPQGNFVLP (107 aa)) folds into the FAD-binding FR-type domain. Residues 299 to 380 (GTVTFARSGK…AASGDCVLDI (82 aa)) form the 2Fe-2S ferredoxin-type domain. [2Fe-2S] cluster is bound by residues Cys333, Cys338, Cys341, and Cys368.

Interacts with DesA3 to form a functional acyl-CoA desaturase complex. [2Fe-2S] cluster is required as a cofactor. Requires FAD as cofactor.

The protein localises to the cell membrane. Its pathway is lipid metabolism; fatty acid metabolism. Its function is as follows. Is likely involved in the aerobic desaturation system responsible for the synthesis of oleic acid from stearoyl-CoA; oleic acid is a precursor of mycobacterial membrane phospholipids and triglycerides. Is the electron transfer partner for the stearoyl-CoA 9-desaturase DesA3. Catalyzes electron transfer reaction between NADPH and the diiron center of DesA3. Cannot use NADH. This is NADPH oxidoreductase from Mycobacterium tuberculosis (strain ATCC 25618 / H37Rv).